The chain runs to 620 residues: Cilia- and flagella-associated protein 52 (620 aa).

WD repeat units follow at residues 62–106 (GHGN…LLAR), 109–150 (LHKG…AICG), 156–195 (LNVGNATNVIFSRCRDEMFMTAGNGTIRVWELDLPNRKIW), 288–327 (QLQGGITSITLRGEGHQFLVGTEESHIYRVSFTDFKETLI), 330–369 (CHFDAVEDIVFPFGTAELFATCAKKDIRVWHTSSNRELLR), 372–411 (VPNMTCHGIDFMRDGKSIISAWNDGKIRAFAPETGRLMYV), 415–454 (AHRIGVTAIATTSDCKRVISGGGEGEVRVWQIGCQTQKLE), 459–498 (EHKSSVSCIRVKRNNEECVTASTDGTCIIWDLVRLRRNQM), 500–539 (LANTLFQCVCYHPEEFQIITSGTDRKIAYWEVFDGTVIRE), 543–582 (SLSGSINGMDITQEGVHFVTGGNDHLVKVWDYNEGEVTHV), and 585–620 (GHSGNITRIRISPGNQYIVSVSADGAILRWKYPYTS).

This sequence belongs to the CFAP52 family. As to quaternary structure, microtubule inner protein component of sperm flagellar doublet microtubules. Interacts with BRCA2. Interacts with the CCT chaperonin complex. Interacts with HSP70. Interacts with AK8. Interacts with CFAP45. Interacts with DNAI1. Interacts with IQDC. In terms of tissue distribution, expressed in respiratory cells and sperm (at protein level). Highly expressed in testis. Up-regulated in hepatocellular carcinoma (HCC).

The protein localises to the cytoplasm. It localises to the cytoskeleton. It is found in the cilium axoneme. The protein resides in the flagellum axoneme. Its function is as follows. Microtubule inner protein (MIP) part of the dynein-decorated doublet microtubules (DMTs) in cilia axoneme. Important for proper ciliary and flagellar beating. May act in cooperation with CFAP45 and axonemal dynein subunit DNAH11. May play a role in cell growth and/or survival. The polypeptide is Cilia- and flagella-associated protein 52 (Homo sapiens (Human)).